A 166-amino-acid polypeptide reads, in one-letter code: NAD(P)H-quinone oxidoreductase subunit I, chloroplastic (166 aa).

4Fe-4S ferredoxin-type domains follow at residues 55 to 84 (GRIH…VDWK) and 95 to 124 (LNYS…MTEE). Residues Cys-64, Cys-67, Cys-70, Cys-74, Cys-104, Cys-107, Cys-110, and Cys-114 each contribute to the [4Fe-4S] cluster site.

It belongs to the complex I 23 kDa subunit family. In terms of assembly, NDH is composed of at least 16 different subunits, 5 of which are encoded in the nucleus. [4Fe-4S] cluster is required as a cofactor.

The protein localises to the plastid. It localises to the chloroplast thylakoid membrane. It carries out the reaction a plastoquinone + NADH + (n+1) H(+)(in) = a plastoquinol + NAD(+) + n H(+)(out). The catalysed reaction is a plastoquinone + NADPH + (n+1) H(+)(in) = a plastoquinol + NADP(+) + n H(+)(out). Functionally, NDH shuttles electrons from NAD(P)H:plastoquinone, via FMN and iron-sulfur (Fe-S) centers, to quinones in the photosynthetic chain and possibly in a chloroplast respiratory chain. The immediate electron acceptor for the enzyme in this species is believed to be plastoquinone. Couples the redox reaction to proton translocation, and thus conserves the redox energy in a proton gradient. The polypeptide is NAD(P)H-quinone oxidoreductase subunit I, chloroplastic (Steiractinia sodiroi).